Reading from the N-terminus, the 207-residue chain is Putative 3-methyladenine DNA glycosylase (207 aa).

It belongs to the DNA glycosylase MPG family.

This Listeria monocytogenes serotype 4a (strain HCC23) protein is Putative 3-methyladenine DNA glycosylase.